The sequence spans 192 residues: Orotate phosphoribosyltransferase (192 aa).

Residues arginine 101, lysine 102, lysine 105, histidine 107, and 129–137 each bind 5-phospho-alpha-D-ribose 1-diphosphate; that span reads EDVITTGGS. The orotate site is built by threonine 133 and arginine 161.

Belongs to the purine/pyrimidine phosphoribosyltransferase family. PyrE subfamily. As to quaternary structure, homodimer. Mg(2+) serves as cofactor.

It catalyses the reaction orotidine 5'-phosphate + diphosphate = orotate + 5-phospho-alpha-D-ribose 1-diphosphate. The protein operates within pyrimidine metabolism; UMP biosynthesis via de novo pathway; UMP from orotate: step 1/2. Functionally, catalyzes the transfer of a ribosyl phosphate group from 5-phosphoribose 1-diphosphate to orotate, leading to the formation of orotidine monophosphate (OMP). This Sorangium cellulosum (strain So ce56) (Polyangium cellulosum (strain So ce56)) protein is Orotate phosphoribosyltransferase.